We begin with the raw amino-acid sequence, 535 residues long: RNA-splicing ligase RtcB homolog 1 (535 aa).

A compositionally biased stretch (basic residues) spans 1–16 (MAKSRYSRKNKGKKLQ). Residues 1–29 (MAKSRYSRKNKGKKLQRVQENTVSTEEKS) form a disordered region. Mn(2+)-binding residues include D152, C155, H260, H292, and H383. 259 to 263 (NHYLE) serves as a coordination point for GMP. GMP is bound by residues 383-384 (HN), 432-435 (GGSM), S439, 458-461 (HGAG), and K534. H458 (GMP-histidine intermediate) is an active-site residue.

Belongs to the RtcB family. In terms of assembly, catalytic component of the tRNA-splicing ligase complex. Mn(2+) serves as cofactor.

It catalyses the reaction a 3'-end 3'-phospho-ribonucleotide-RNA + a 5'-end dephospho-ribonucleoside-RNA + GTP = a ribonucleotidyl-ribonucleotide-RNA + GMP + diphosphate. The catalysed reaction is a 3'-end 2',3'-cyclophospho-ribonucleotide-RNA + a 5'-end dephospho-ribonucleoside-RNA + GTP + H2O = a ribonucleotidyl-ribonucleotide-RNA + GMP + diphosphate + H(+). In terms of biological role, catalytic subunit of the tRNA-splicing ligase complex that acts by directly joining spliced tRNA halves to mature-sized tRNAs by incorporating the precursor-derived splice junction phosphate into the mature tRNA as a canonical 3',5'-phosphodiester. May act as an RNA ligase with broad substrate specificity, and may function toward other RNAs. The chain is RNA-splicing ligase RtcB homolog 1 from Entamoeba dispar (strain ATCC PRA-260 / SAW760).